Here is a 558-residue protein sequence, read N- to C-terminus: CTP synthase (558 aa).

The interval 1-267 (MAKFVFVTGG…CLEMLDVLNL (267 aa)) is amidoligase domain. S13 contacts CTP. Residue S13 coordinates UTP. ATP-binding positions include 14–19 (SIGKGI) and D71. Positions 71 and 141 each coordinate Mg(2+). CTP-binding positions include 148–150 (DIE), 188–193 (KTKPTQ), and K224. UTP-binding positions include 188–193 (KTKPTQ) and K224. The region spanning 292–534 (KVALVGKYVQ…IEAAQLRLPA (243 aa)) is the Glutamine amidotransferase type-1 domain. Position 354 (G354) interacts with L-glutamine. C381 functions as the Nucleophile; for glutamine hydrolysis in the catalytic mechanism. L-glutamine is bound by residues 382–385 (LGMQ), E405, and R462. Active-site residues include H507 and E509. Positions 536 to 558 (PDEALRRQSQTNISAQEQPSRIG) are disordered. A compositionally biased stretch (polar residues) spans 542–558 (RQSQTNISAQEQPSRIG).

It belongs to the CTP synthase family. As to quaternary structure, homotetramer.

The catalysed reaction is UTP + L-glutamine + ATP + H2O = CTP + L-glutamate + ADP + phosphate + 2 H(+). It carries out the reaction L-glutamine + H2O = L-glutamate + NH4(+). The enzyme catalyses UTP + NH4(+) + ATP = CTP + ADP + phosphate + 2 H(+). It participates in pyrimidine metabolism; CTP biosynthesis via de novo pathway; CTP from UDP: step 2/2. With respect to regulation, allosterically activated by GTP, when glutamine is the substrate; GTP has no effect on the reaction when ammonia is the substrate. The allosteric effector GTP functions by stabilizing the protein conformation that binds the tetrahedral intermediate(s) formed during glutamine hydrolysis. Inhibited by the product CTP, via allosteric rather than competitive inhibition. Catalyzes the ATP-dependent amination of UTP to CTP with either L-glutamine or ammonia as the source of nitrogen. Regulates intracellular CTP levels through interactions with the four ribonucleotide triphosphates. In Prochlorococcus marinus (strain MIT 9313), this protein is CTP synthase.